The sequence spans 300 residues: GTPase Era (300 aa).

One can recognise an Era-type G domain in the interval 4–172 (KSGFVALAGK…LEKIKEELPE (169 aa)). The G1 stretch occupies residues 12 to 19 (GKPNVGKS). 12–19 (GKPNVGKS) is a GTP binding site. The G2 stretch occupies residues 38 to 42 (QTTRN). Residues 59–62 (DTPG) are G3. Residues 59-63 (DTPGI) and 121-124 (NKID) contribute to the GTP site. The segment at 121-124 (NKID) is G4. The interval 151–153 (ISA) is G5. The region spanning 195–280 (IREKIFHLTR…YLDLNVKVKE (86 aa)) is the KH type-2 domain.

It belongs to the TRAFAC class TrmE-Era-EngA-EngB-Septin-like GTPase superfamily. Era GTPase family. Monomer.

Its subcellular location is the cytoplasm. It localises to the cell inner membrane. An essential GTPase that binds both GDP and GTP, with rapid nucleotide exchange. Plays a role in 16S rRNA processing and 30S ribosomal subunit biogenesis and possibly also in cell cycle regulation and energy metabolism. The chain is GTPase Era from Thermotoga petrophila (strain ATCC BAA-488 / DSM 13995 / JCM 10881 / RKU-1).